A 136-amino-acid chain; its full sequence is Ig heavy chain V-A2 region P-MU-3 (136 aa).

Residues 1–19 form the signal peptide; it reads METGLRWLLLVAVLKGVQC. Gln20 carries the pyrrolidone carboxylic acid modification. Residues 20 to 127 enclose the Ig-like domain; it reads QSVKESEGGL…ENEFFNAIWG (108 aa).

This chain is Ig heavy chain V-A2 region P-MU-3, found in Oryctolagus cuniculus (Rabbit).